Here is a 167-residue protein sequence, read N- to C-terminus: 2-amino-4-hydroxy-6-hydroxymethyldihydropteridine pyrophosphokinase (167 aa).

The protein belongs to the HPPK family.

It carries out the reaction 6-hydroxymethyl-7,8-dihydropterin + ATP = (7,8-dihydropterin-6-yl)methyl diphosphate + AMP + H(+). Its pathway is cofactor biosynthesis; tetrahydrofolate biosynthesis; 2-amino-4-hydroxy-6-hydroxymethyl-7,8-dihydropteridine diphosphate from 7,8-dihydroneopterin triphosphate: step 4/4. Its function is as follows. Catalyzes the transfer of pyrophosphate from adenosine triphosphate (ATP) to 6-hydroxymethyl-7,8-dihydropterin, an enzymatic step in folate biosynthesis pathway. The protein is 2-amino-4-hydroxy-6-hydroxymethyldihydropteridine pyrophosphokinase (folK) of Bacillus subtilis (strain 168).